We begin with the raw amino-acid sequence, 289 residues long: Spore coat polysaccharide biosynthesis protein SpsD (289 aa).

The 153-residue stretch at Phe-137–Lys-289 folds into the N-acetyltransferase domain.

The protein operates within spore coat biogenesis; spore coat polysaccharide biosynthesis. The polypeptide is Spore coat polysaccharide biosynthesis protein SpsD (spsD) (Bacillus subtilis (strain 168)).